We begin with the raw amino-acid sequence, 192 residues long: UPF0312 protein Avin_03250 (192 aa).

The signal sequence occupies residues Met1–Ala23.

Belongs to the UPF0312 family. Type 1 subfamily.

It is found in the periplasm. The chain is UPF0312 protein Avin_03250 from Azotobacter vinelandii (strain DJ / ATCC BAA-1303).